The primary structure comprises 310 residues: Porphobilinogen deaminase (310 aa).

Position 236 is an S-(dipyrrolylmethanemethyl)cysteine (cysteine 236).

It belongs to the HMBS family. As to quaternary structure, monomer. It depends on dipyrromethane as a cofactor.

The enzyme catalyses 4 porphobilinogen + H2O = hydroxymethylbilane + 4 NH4(+). It participates in porphyrin-containing compound metabolism; protoporphyrin-IX biosynthesis; coproporphyrinogen-III from 5-aminolevulinate: step 2/4. In terms of biological role, tetrapolymerization of the monopyrrole PBG into the hydroxymethylbilane pre-uroporphyrinogen in several discrete steps. The polypeptide is Porphobilinogen deaminase (Nitratiruptor sp. (strain SB155-2)).